The primary structure comprises 369 residues: Proton-coupled zinc antiporter SLC30A8 (369 aa).

Over 1 to 79 (MEFLERTYLV…AKWKLCSASA (79 aa)) the chain is Cytoplasmic. Positions 31 to 52 (PVNKDQCPRERPEELESGGMYH) are disordered. Positions 32–44 (VNKDQCPRERPEE) are enriched in basic and acidic residues. His-52, Cys-53, and His-54 together coordinate Zn(2+). The short motif at 52 to 54 (HCH) is the HCH Motif; seals regulatory zinc-binding pocket element. The helical transmembrane segment at 80–100 (ICFIFMIAEVVGGHIAGSLAV) threads the bilayer. Residues 101–103 (VTD) lie on the Lumenal, vesicle side of the membrane. The helical transmembrane segment at 104–124 (AAHLLIDLTSFLLSLFSLWLS) threads the bilayer. His-106, Asp-110, and His-137 together coordinate Zn(2+). The Cytoplasmic portion of the chain corresponds to 125-140 (SKPPSKRLTFGWHRAE). A helical membrane pass occupies residues 141–161 (ILGALLSILCIWVVTGVLVYL). At 162 to 175 (ACERLLYPDYQIQA) the chain is on the lumenal, vesicle side. The chain crosses the membrane as a helical span at residues 176-196 (TVMIIVSSCAVAANIVLTVVL). At 197–217 (HQRCLGHNHKEVQANASVRAA) the chain is on the cytoplasmic side. The chain crosses the membrane as a helical span at residues 218–238 (FVHALGDLFQSISVLISALII). Positions 220 and 224 each coordinate Zn(2+). The Lumenal, vesicle segment spans residues 239–245 (YFKPEYK). Residues 246–266 (IADPICTFIFSILVLASTITI) traverse the membrane as a helical segment. Residues 267–369 (LKDFSILLME…DCLFCEDPCD (103 aa)) are Cytoplasmic-facing. Zn(2+) contacts are provided by His-301, His-318, His-345, Glu-352, Cys-361, and Cys-364.

The protein belongs to the cation diffusion facilitator (CDF) transporter (TC 2.A.4) family. SLC30A subfamily. Homodimer. In the endocrine pancreas, expressed in insulin-producing beta cells. Expressed at relatively high levels in subcutaneous fat tissue from lean persons; much lower levels in visceral fat, whether from lean or obese individuals, and in subcutaneous fat tissue from obese individuals. Expressed in peripheral blood mononuclear cells, including T-cells and B-cells, with great variation among individuals ranging from negative to strongly positive.

The protein localises to the cytoplasmic vesicle. It localises to the secretory vesicle membrane. It is found in the cell membrane. The enzyme catalyses Zn(2+)(in) + 2 H(+)(out) = Zn(2+)(out) + 2 H(+)(in). Functionally, proton-coupled zinc ion antiporter mediating the entry of zinc into the lumen of pancreatic beta cell secretory granules, thereby regulating insulin secretion. In Homo sapiens (Human), this protein is Proton-coupled zinc antiporter SLC30A8.